The primary structure comprises 298 residues: Porphobilinogen deaminase (298 aa).

Cys239 is subject to S-(dipyrrolylmethanemethyl)cysteine.

The protein belongs to the HMBS family. Monomer. The cofactor is dipyrromethane.

It catalyses the reaction 4 porphobilinogen + H2O = hydroxymethylbilane + 4 NH4(+). Its pathway is porphyrin-containing compound metabolism; protoporphyrin-IX biosynthesis; coproporphyrinogen-III from 5-aminolevulinate: step 2/4. Functionally, tetrapolymerization of the monopyrrole PBG into the hydroxymethylbilane pre-uroporphyrinogen in several discrete steps. In Ehrlichia canis (strain Jake), this protein is Porphobilinogen deaminase.